A 304-amino-acid chain; its full sequence is Non-specific ribonucleoside hydrolase RihC (304 aa).

Residue His-233 is part of the active site.

The protein belongs to the IUNH family. RihC subfamily.

Functionally, hydrolyzes both purine and pyrimidine ribonucleosides with a broad-substrate specificity. The sequence is that of Non-specific ribonucleoside hydrolase RihC from Escherichia coli (strain SE11).